Here is a 144-residue protein sequence, read N- to C-terminus: Transcriptional regulator MraZ (144 aa).

2 consecutive SpoVT-AbrB domains span residues 5 to 47 and 77 to 120; these read TYTP…PRAE and TDEQ…DAQA.

The protein belongs to the MraZ family. Forms oligomers.

The protein resides in the cytoplasm. Its subcellular location is the nucleoid. The sequence is that of Transcriptional regulator MraZ from Mycolicibacterium vanbaalenii (strain DSM 7251 / JCM 13017 / BCRC 16820 / KCTC 9966 / NRRL B-24157 / PYR-1) (Mycobacterium vanbaalenii).